The sequence spans 96 residues: Protein ORF5 (96 aa).

The protein belongs to the microviridae C protein family.

Functionally, plays a central role in the packaging of viral DNA into phage procapsid, which occurs in the late stage of infection. Can interact with the replicative complex after the completion of one round of DNA synthesis. When protein ORF5 is bound to the replicative form, the complex becomes accessible to procapsid and serves as a DNA packaging apparatus. In Chlamydia phage 1 (Bacteriophage Chp1), this protein is Protein ORF5.